A 155-amino-acid polypeptide reads, in one-letter code: MAHPPLEPIEALASATAQSLGFLMESVVLHSHRAPQALIVAVRKGDGSDVNLDDCASFSQAFGEALETGELLTGAYVLEITSPGLGDVLQQDRDFRSFRGFPVCVRQRDAKGGEIQREGTLLGRDADAVELNLRGRIQRIPRSDVLEVRLTSPSA.

Belongs to the RimP family.

The protein resides in the cytoplasm. Its function is as follows. Required for maturation of 30S ribosomal subunits. The protein is Ribosome maturation factor RimP of Synechococcus sp. (strain RCC307).